A 335-amino-acid polypeptide reads, in one-letter code: Probable tRNA N6-adenosine threonylcarbamoyltransferase (335 aa).

His109, His113, and Tyr130 together coordinate a divalent metal cation. Residues 130-134, Asp162, Gly177, Glu181, and Asn266 each bind substrate; that span reads YVSGG. Asp294 contributes to the a divalent metal cation binding site.

The protein belongs to the KAE1 / TsaD family. Component of the EKC/KEOPS complex; the whole complex dimerizes. A divalent metal cation serves as cofactor.

Its subcellular location is the cytoplasm. The protein localises to the nucleus. It catalyses the reaction L-threonylcarbamoyladenylate + adenosine(37) in tRNA = N(6)-L-threonylcarbamoyladenosine(37) in tRNA + AMP + H(+). Component of the EKC/KEOPS complex that is required for the formation of a threonylcarbamoyl group on adenosine at position 37 (t(6)A37) in tRNAs that read codons beginning with adenine. The complex is probably involved in the transfer of the threonylcarbamoyl moiety of threonylcarbamoyl-AMP (TC-AMP) to the N6 group of A37. Osgep likely plays a direct catalytic role in this reaction, but requires other protein(s) of the complex to fulfill this activity. This chain is Probable tRNA N6-adenosine threonylcarbamoyltransferase, found in Nematostella vectensis (Starlet sea anemone).